The following is an 83-amino-acid chain: UPF0297 protein Moth_1643 (83 aa).

Belongs to the UPF0297 family.

The protein is UPF0297 protein Moth_1643 of Moorella thermoacetica (strain ATCC 39073 / JCM 9320).